The chain runs to 335 residues: Beta-ketoacyl-[acyl-carrier-protein] synthase III (335 aa).

Catalysis depends on residues cysteine 119 and histidine 261. The tract at residues 262–266 (QANQR) is ACP-binding. Residue asparagine 291 is part of the active site.

This sequence belongs to the thiolase-like superfamily. FabH family. As to quaternary structure, homodimer.

Its subcellular location is the cytoplasm. It catalyses the reaction malonyl-[ACP] + acetyl-CoA + H(+) = 3-oxobutanoyl-[ACP] + CO2 + CoA. It functions in the pathway lipid metabolism; fatty acid biosynthesis. In terms of biological role, catalyzes the condensation reaction of fatty acid synthesis by the addition to an acyl acceptor of two carbons from malonyl-ACP. Catalyzes the first condensation reaction which initiates fatty acid synthesis and may therefore play a role in governing the total rate of fatty acid production. Possesses both acetoacetyl-ACP synthase and acetyl transacylase activities. Its substrate specificity determines the biosynthesis of branched-chain and/or straight-chain of fatty acids. The polypeptide is Beta-ketoacyl-[acyl-carrier-protein] synthase III (Prochlorococcus marinus (strain MIT 9301)).